Consider the following 162-residue polypeptide: Solute carrier family 2, facilitated glucose transporter member 4 (162 aa).

The Extracellular portion of the chain corresponds to 1-13; the sequence is TSIFETAGVGQPA. Residues 14-34 form a helical membrane-spanning segment; that stretch reads YATIGAGVVNTVFTLVSVFLV. Residue Asn-23 coordinates D-glucose. Over 35–43 the chain is Cytoplasmic; it reads ERAGRRTLH. The helical transmembrane segment at 44–64 threads the bilayer; the sequence is LLGLAGMCGCAILMTIALLLL. At 65–75 the chain is on the extracellular side; that stretch reads ERLPAMSYVSI. A helical membrane pass occupies residues 76 to 96; the sequence is VAIFGFVAFFEIGPGPIPWFI. D-glucose is bound by residues Glu-86 and Trp-94. Over 97 to 107 the chain is Cytoplasmic; the sequence is VAELFSQGPRP. The helical transmembrane segment at 108–128 threads the bilayer; the sequence is AAMAVAGFCNWTSNFIIGMGF. The Extracellular segment spans residues 129-135; the sequence is QYIAXAM. The helical transmembrane segment at 136–156 threads the bilayer; it reads GPYVFLLFAVLLLAFFIFTFL. The Cytoplasmic portion of the chain corresponds to 157–162; sequence KVPETR.

This sequence belongs to the major facilitator superfamily. Sugar transporter (TC 2.A.1.1) family. Glucose transporter subfamily. As to quaternary structure, binds to DAXX. Interacts via its N-terminus with SRFBP1. Interacts with NDUFA9. Interacts with TRARG1; the interaction is required for proper SLC2A4 recycling after insulin stimulation. Post-translationally, sumoylated. In terms of processing, palmitoylated. Palmitoylation by ZDHHC7 controls the insulin-dependent translocation of GLUT4 to the plasma membrane.

The protein resides in the cell membrane. Its subcellular location is the endomembrane system. It localises to the cytoplasm. It is found in the perinuclear region. It catalyses the reaction D-glucose(out) = D-glucose(in). Functionally, insulin-regulated facilitative glucose transporter, which plays a key role in removal of glucose from circulation. Response to insulin is regulated by its intracellular localization: in the absence of insulin, it is efficiently retained intracellularly within storage compartments in muscle and fat cells. Upon insulin stimulation, translocates from these compartments to the cell surface where it transports glucose from the extracellular milieu into the cell. The polypeptide is Solute carrier family 2, facilitated glucose transporter member 4 (Canis lupus familiaris (Dog)).